The primary structure comprises 396 residues: Stearoyl-[acyl-carrier-protein] 9-desaturase, chloroplastic (396 aa).

The transit peptide at 1-33 (MALRITPVTLQSERYRSFSFPKKANLRSPKFAM) directs the protein to the chloroplast. Position 34 is a blocked amino end (Ala); partial (Ala34). Residues Glu138, Glu176, His179, Glu229, Glu262, and His265 each coordinate Fe cation.

It belongs to the fatty acid desaturase type 2 family. In terms of assembly, homodimer. Fe(2+) serves as cofactor. In terms of processing, most of the N-terminus is blocked.

It is found in the plastid. The protein resides in the chloroplast. It carries out the reaction octadecanoyl-[ACP] + 2 reduced [2Fe-2S]-[ferredoxin] + O2 + 2 H(+) = (9Z)-octadecenoyl-[ACP] + 2 oxidized [2Fe-2S]-[ferredoxin] + 2 H2O. It functions in the pathway lipid metabolism; fatty acid metabolism. In terms of biological role, converts stearoyl-ACP to oleoyl-ACP by introduction of a cis double bond between carbons 9 and 10 of the acyl chain. This Carthamus tinctorius (Safflower) protein is Stearoyl-[acyl-carrier-protein] 9-desaturase, chloroplastic.